Reading from the N-terminus, the 369-residue chain is NADH-quinone oxidoreductase subunit H (369 aa).

Helical transmembrane passes span Val-20–Val-40, Ile-88–Ile-108, Ile-133–Gly-153, Ile-179–Val-199, Met-205–Leu-225, Ile-267–Ile-287, Ile-293–Ile-313, and Leu-328–Leu-348.

Belongs to the complex I subunit 1 family. In terms of assembly, NDH-1 is composed of 14 different subunits. Subunits NuoA, H, J, K, L, M, N constitute the membrane sector of the complex.

It is found in the cell inner membrane. The enzyme catalyses a quinone + NADH + 5 H(+)(in) = a quinol + NAD(+) + 4 H(+)(out). NDH-1 shuttles electrons from NADH, via FMN and iron-sulfur (Fe-S) centers, to quinones in the respiratory chain. The immediate electron acceptor for the enzyme in this species is believed to be ubiquinone. Couples the redox reaction to proton translocation (for every two electrons transferred, four hydrogen ions are translocated across the cytoplasmic membrane), and thus conserves the redox energy in a proton gradient. This subunit may bind ubiquinone. The chain is NADH-quinone oxidoreductase subunit H from Ehrlichia canis (strain Jake).